The sequence spans 349 residues: Isopentenyl-diphosphate delta-isomerase (349 aa).

Residue 7 to 8 participates in substrate binding; the sequence is RK. FMN contacts are provided by residues Ser65, 66–68, Ser96, and Asn124; that span reads SMT. 96-98 is a binding site for substrate; the sequence is SQR. Gln159 contributes to the substrate binding site. Position 160 (Glu160) interacts with Mg(2+). Residues Lys191, Thr221, 271–273, and 292–293 each bind FMN; these read GIR and AA.

This sequence belongs to the IPP isomerase type 2 family. Homooctamer. Dimer of tetramers. Requires FMN as cofactor. It depends on NADPH as a cofactor. Mg(2+) is required as a cofactor.

It is found in the cytoplasm. It carries out the reaction isopentenyl diphosphate = dimethylallyl diphosphate. Functionally, involved in the biosynthesis of isoprenoids. Catalyzes the 1,3-allylic rearrangement of the homoallylic substrate isopentenyl (IPP) to its allylic isomer, dimethylallyl diphosphate (DMAPP). This Synechocystis sp. (strain ATCC 27184 / PCC 6803 / Kazusa) protein is Isopentenyl-diphosphate delta-isomerase.